The following is a 218-amino-acid chain: Elongation factor Ts (218 aa).

The interval 82–85 (TDFV) is involved in Mg(2+) ion dislocation from EF-Tu.

It belongs to the EF-Ts family.

It localises to the cytoplasm. Associates with the EF-Tu.GDP complex and induces the exchange of GDP to GTP. It remains bound to the aminoacyl-tRNA.EF-Tu.GTP complex up to the GTP hydrolysis stage on the ribosome. The sequence is that of Elongation factor Ts from Prochlorococcus marinus (strain MIT 9215).